We begin with the raw amino-acid sequence, 381 residues long: 1-deoxy-D-xylulose 5-phosphate reductoisomerase (381 aa).

Positions 10, 11, 12, 13, 36, 37, 38, and 120 each coordinate NADPH. K121 is a binding site for 1-deoxy-D-xylulose 5-phosphate. NADPH is bound at residue E122. Position 146 (D146) interacts with Mn(2+). 1-deoxy-D-xylulose 5-phosphate is bound by residues S147, E148, S172, and H195. Residue E148 coordinates Mn(2+). Position 201 (G201) interacts with NADPH. Residues S208, N213, K214, and E217 each contribute to the 1-deoxy-D-xylulose 5-phosphate site. Mn(2+) is bound at residue E217.

Belongs to the DXR family. Requires Mg(2+) as cofactor. The cofactor is Mn(2+).

It catalyses the reaction 2-C-methyl-D-erythritol 4-phosphate + NADP(+) = 1-deoxy-D-xylulose 5-phosphate + NADPH + H(+). The protein operates within isoprenoid biosynthesis; isopentenyl diphosphate biosynthesis via DXP pathway; isopentenyl diphosphate from 1-deoxy-D-xylulose 5-phosphate: step 1/6. Functionally, catalyzes the NADPH-dependent rearrangement and reduction of 1-deoxy-D-xylulose-5-phosphate (DXP) to 2-C-methyl-D-erythritol 4-phosphate (MEP). The sequence is that of 1-deoxy-D-xylulose 5-phosphate reductoisomerase from Lysinibacillus sphaericus (strain C3-41).